Consider the following 661-residue polypeptide: Glycogen debranching enzyme (661 aa).

Aspartate 338 serves as the catalytic Nucleophile. Residue glutamate 373 is the Proton donor of the active site. Residues 460 to 481 (NQLNGEGNRDGSDRNFSNNHGV) are disordered.

It belongs to the glycosyl hydrolase 13 family.

It catalyses the reaction Hydrolysis of (1-&gt;6)-alpha-D-glucosidic linkages to branches with degrees of polymerization of three or four glucose residues in limit dextrin.. It participates in glycan degradation; glycogen degradation. Its function is as follows. Removes maltotriose and maltotetraose chains that are attached by 1,6-alpha-linkage to the limit dextrin main chain, generating a debranched limit dextrin. The polypeptide is Glycogen debranching enzyme (Serratia proteamaculans (strain 568)).